Reading from the N-terminus, the 204-residue chain is Putative glutathione S-transferase alpha-3 (204 aa).

Threonine 2 is subject to N-acetylthreonine. The 78-residue stretch at 2 to 79 (TKPQLSYFKV…YIASQHDFVG (78 aa)) folds into the GST N-terminal domain. Glutathione-binding positions include tyrosine 8, 49-50 (QL), and 63-64 (QS). Residues 81–202 (TPEEKALVDE…YLKNRPITER (122 aa)) enclose the GST C-terminal domain.

The protein belongs to the GST superfamily. Alpha family.

It carries out the reaction RX + glutathione = an S-substituted glutathione + a halide anion + H(+). Conjugation of reduced glutathione to a wide number of exogenous and endogenous hydrophobic electrophiles. This Dictyostelium discoideum (Social amoeba) protein is Putative glutathione S-transferase alpha-3 (gsta3).